The sequence spans 324 residues: Cytosolic sulfotransferase 13 (324 aa).

Lys-76–Trp-81 provides a ligand contact to 3'-phosphoadenylyl sulfate. His-134 functions as the Proton acceptor in the catalytic mechanism. 3'-phosphoadenylyl sulfate contacts are provided by residues Arg-156, Ser-164, Tyr-222, and Arg-288–Gly-290.

It belongs to the sulfotransferase 1 family.

It localises to the cytoplasm. Sulfotransferase that utilizes 3'-phospho-5'-adenylyl sulfate (PAPS) as sulfonate donor. In Arabidopsis thaliana (Mouse-ear cress), this protein is Cytosolic sulfotransferase 13 (SOT13).